The primary structure comprises 977 residues: Bifunctional glutamine synthetase adenylyltransferase/adenylyl-removing enzyme (977 aa).

The adenylyl removase stretch occupies residues 1-457 (MRLPLPSDLP…HFRQVIADPD (457 aa)). The adenylyl transferase stretch occupies residues 468 to 977 (GGEWSPLWEQ…RRIWGELGLS (510 aa)).

Belongs to the GlnE family. Mg(2+) is required as a cofactor.

It catalyses the reaction [glutamine synthetase]-O(4)-(5'-adenylyl)-L-tyrosine + phosphate = [glutamine synthetase]-L-tyrosine + ADP. The enzyme catalyses [glutamine synthetase]-L-tyrosine + ATP = [glutamine synthetase]-O(4)-(5'-adenylyl)-L-tyrosine + diphosphate. Functionally, involved in the regulation of glutamine synthetase GlnA, a key enzyme in the process to assimilate ammonia. When cellular nitrogen levels are high, the C-terminal adenylyl transferase (AT) inactivates GlnA by covalent transfer of an adenylyl group from ATP to specific tyrosine residue of GlnA, thus reducing its activity. Conversely, when nitrogen levels are low, the N-terminal adenylyl removase (AR) activates GlnA by removing the adenylyl group by phosphorolysis, increasing its activity. The regulatory region of GlnE binds the signal transduction protein PII (GlnB) which indicates the nitrogen status of the cell. This chain is Bifunctional glutamine synthetase adenylyltransferase/adenylyl-removing enzyme, found in Pseudomonas putida (strain ATCC 47054 / DSM 6125 / CFBP 8728 / NCIMB 11950 / KT2440).